The primary structure comprises 192 residues: Elongation factor P (192 aa).

The protein belongs to the elongation factor P family.

The protein resides in the cytoplasm. It functions in the pathway protein biosynthesis; polypeptide chain elongation. In terms of biological role, involved in peptide bond synthesis. Stimulates efficient translation and peptide-bond synthesis on native or reconstituted 70S ribosomes in vitro. Probably functions indirectly by altering the affinity of the ribosome for aminoacyl-tRNA, thus increasing their reactivity as acceptors for peptidyl transferase. This Borrelia recurrentis (strain A1) protein is Elongation factor P.